The primary structure comprises 120 residues: Large ribosomal subunit protein bL17 (120 aa).

The protein belongs to the bacterial ribosomal protein bL17 family. In terms of assembly, part of the 50S ribosomal subunit. Contacts protein L32.

The chain is Large ribosomal subunit protein bL17 from Mesomycoplasma hyopneumoniae (strain J / ATCC 25934 / NCTC 10110) (Mycoplasma hyopneumoniae).